Reading from the N-terminus, the 143-residue chain is Small ribosomal subunit protein uS12 (143 aa).

The span at 1-15 (MGKCRGLRTARKLRD) shows a compositional bias: basic residues. A disordered region spans residues 1-27 (MGKCRGLRTARKLRDHRREQKWHDKQY). Residues 16–27 (HRREQKWHDKQY) show a composition bias toward basic and acidic residues.

Belongs to the universal ribosomal protein uS12 family. Component of the 40S small ribosomal subunit.

It is found in the cytoplasm. The protein resides in the cytosol. The protein localises to the rough endoplasmic reticulum. The sequence is that of Small ribosomal subunit protein uS12 (rps23) from Ictalurus punctatus (Channel catfish).